The following is a 117-amino-acid chain: Large ribosomal subunit protein bL19 (117 aa).

It belongs to the bacterial ribosomal protein bL19 family.

Functionally, this protein is located at the 30S-50S ribosomal subunit interface and may play a role in the structure and function of the aminoacyl-tRNA binding site. The polypeptide is Large ribosomal subunit protein bL19 (Aliivibrio fischeri (strain ATCC 700601 / ES114) (Vibrio fischeri)).